Consider the following 251-residue polypeptide: Triosephosphate isomerase (251 aa).

Position 9 to 11 (9 to 11 (NWK)) interacts with substrate. The active-site Electrophile is the H95. E167 functions as the Proton acceptor in the catalytic mechanism. Substrate-binding positions include G173, S212, and 233 to 234 (GG).

Belongs to the triosephosphate isomerase family. In terms of assembly, homodimer.

It localises to the cytoplasm. The catalysed reaction is D-glyceraldehyde 3-phosphate = dihydroxyacetone phosphate. The protein operates within carbohydrate biosynthesis; gluconeogenesis. Its pathway is carbohydrate degradation; glycolysis; D-glyceraldehyde 3-phosphate from glycerone phosphate: step 1/1. Functionally, involved in the gluconeogenesis. Catalyzes stereospecifically the conversion of dihydroxyacetone phosphate (DHAP) to D-glyceraldehyde-3-phosphate (G3P). This is Triosephosphate isomerase from Pseudomonas savastanoi pv. phaseolicola (strain 1448A / Race 6) (Pseudomonas syringae pv. phaseolicola (strain 1448A / Race 6)).